The chain runs to 276 residues: Formamidopyrimidine-DNA glycosylase (276 aa).

The active-site Schiff-base intermediate with DNA is the Pro-2. Residue Glu-3 is the Proton donor of the active site. Lys-58 functions as the Proton donor; for beta-elimination activity in the catalytic mechanism. DNA contacts are provided by His-94, Arg-112, and Arg-157. The segment at 242–276 adopts an FPG-type zinc-finger fold; the sequence is FVYDRAGEPCRVCGAPIRQIVQGQRSTYFCPNCQR. Arg-266 functions as the Proton donor; for delta-elimination activity in the catalytic mechanism.

The protein belongs to the FPG family. As to quaternary structure, monomer. Requires Zn(2+) as cofactor.

It carries out the reaction Hydrolysis of DNA containing ring-opened 7-methylguanine residues, releasing 2,6-diamino-4-hydroxy-5-(N-methyl)formamidopyrimidine.. It catalyses the reaction 2'-deoxyribonucleotide-(2'-deoxyribose 5'-phosphate)-2'-deoxyribonucleotide-DNA = a 3'-end 2'-deoxyribonucleotide-(2,3-dehydro-2,3-deoxyribose 5'-phosphate)-DNA + a 5'-end 5'-phospho-2'-deoxyribonucleoside-DNA + H(+). Involved in base excision repair of DNA damaged by oxidation or by mutagenic agents. Acts as a DNA glycosylase that recognizes and removes damaged bases. Has a preference for oxidized purines, such as 7,8-dihydro-8-oxoguanine (8-oxoG). Has AP (apurinic/apyrimidinic) lyase activity and introduces nicks in the DNA strand. Cleaves the DNA backbone by beta-delta elimination to generate a single-strand break at the site of the removed base with both 3'- and 5'-phosphates. This chain is Formamidopyrimidine-DNA glycosylase, found in Burkholderia pseudomallei (strain 1710b).